The following is a 317-amino-acid chain: Transcription initiation factor IIB 3 (317 aa).

Over residues 1 to 14 (MERATREREKEQRE) the composition is skewed to basic and acidic residues. Residues 1–25 (MERATREREKEQREQAQTNDEAQQC) are disordered. The TFIIB-type zinc-finger motif lies at 21 to 50 (EAQQCPECNSANVITDQSERVCEDCGLVLE). Zn(2+) contacts are provided by C25, C28, C42, and C45. A disordered region spans residues 62 to 83 (AFNSSERDQKSRVGAPTTKTMH). Repeat copies occupy residues 136–219 (SEID…AQEL) and 230–311 (EYLP…EQIE).

This sequence belongs to the TFIIB family.

Stabilizes TBP binding to an archaeal box-A promoter. Also responsible for recruiting RNA polymerase II to the pre-initiation complex (DNA-TBP-TFIIB). This chain is Transcription initiation factor IIB 3, found in Halobacterium salinarum (strain ATCC 700922 / JCM 11081 / NRC-1) (Halobacterium halobium).